Here is a 151-residue protein sequence, read N- to C-terminus: Macrodomain Ter protein (151 aa).

Belongs to the MatP family. In terms of assembly, homodimer.

The protein resides in the cytoplasm. In terms of biological role, required for spatial organization of the terminus region of the chromosome (Ter macrodomain) during the cell cycle. Prevents early segregation of duplicated Ter macrodomains during cell division. Binds specifically to matS, which is a 13 bp signature motif repeated within the Ter macrodomain. The chain is Macrodomain Ter protein from Enterobacter sp. (strain 638).